The sequence spans 198 residues: Ribosomal RNA small subunit methyltransferase G (198 aa).

Residues G74, F79, 123-124 (IQ), and R136 contribute to the S-adenosyl-L-methionine site.

It belongs to the methyltransferase superfamily. RNA methyltransferase RsmG family.

Its subcellular location is the cytoplasm. It catalyses the reaction guanosine(527) in 16S rRNA + S-adenosyl-L-methionine = N(7)-methylguanosine(527) in 16S rRNA + S-adenosyl-L-homocysteine. Functionally, specifically methylates the N7 position of guanine in position 527 of 16S rRNA. This is Ribosomal RNA small subunit methyltransferase G from Orientia tsutsugamushi (strain Ikeda) (Rickettsia tsutsugamushi).